The primary structure comprises 483 residues: Glutamate--tRNA ligase (483 aa).

The 'HIGH' region motif lies at 9–19; the sequence is PSPTGNLHIGT. The short motif at 250 to 254 is the 'KMSKS' region element; it reads KLSKR. ATP is bound at residue Lys253.

The protein belongs to the class-I aminoacyl-tRNA synthetase family. Glutamate--tRNA ligase type 1 subfamily. In terms of assembly, monomer.

It localises to the cytoplasm. It carries out the reaction tRNA(Glu) + L-glutamate + ATP = L-glutamyl-tRNA(Glu) + AMP + diphosphate. Its function is as follows. Catalyzes the attachment of glutamate to tRNA(Glu) in a two-step reaction: glutamate is first activated by ATP to form Glu-AMP and then transferred to the acceptor end of tRNA(Glu). This Synechocystis sp. (strain ATCC 27184 / PCC 6803 / Kazusa) protein is Glutamate--tRNA ligase.